The primary structure comprises 269 residues: tRNA pseudouridine synthase A (269 aa).

Residue D55 is the Nucleophile of the active site. Y111 contributes to the substrate binding site.

The protein belongs to the tRNA pseudouridine synthase TruA family.

It catalyses the reaction uridine(38/39/40) in tRNA = pseudouridine(38/39/40) in tRNA. Functionally, formation of pseudouridine at positions 38, 39 and 40 in the anticodon stem and loop of transfer RNAs. This is tRNA pseudouridine synthase A from Methanosarcina acetivorans (strain ATCC 35395 / DSM 2834 / JCM 12185 / C2A).